Here is a 174-residue protein sequence, read N- to C-terminus: MAYEKVNELNLKDTELCLGLPGRTEKIKEEQEVSCVKSNNKRLFEETRDEEESTPPTKTQIVGWPPVRSSRKNNNSVSYVKVSMDGAPYLRKIDLKTYKNYPELLKALENMFKVMIGEYCEREGYKGSGFVPTYEDKDGDWMLVGDVPWDMFSSSCKRLRIMKGSDAPALDSSL.

The EAR-like (transcriptional repression) signature appears at 16 to 20 (LCLGL). Positions 44–67 (FEETRDEEESTPPTKTQIVGWPPV) are disordered. Residues 77–164 (VSYVKVSMDG…SCKRLRIMKG (88 aa)) form the PB1 domain.

Belongs to the Aux/IAA family. In terms of assembly, homodimers and heterodimers. Interacts with the auxin-responsive protein IAA1. Interacts with TPL. Preferentially expressed in vegetative organs.

It localises to the nucleus. In terms of biological role, aux/IAA proteins are short-lived transcriptional factors that function as repressors of early auxin response genes at low auxin concentrations. Repression is thought to result from the interaction with auxin response factors (ARFs), proteins that bind to the auxin-responsive promoter element (AuxRE). Formation of heterodimers with ARF proteins may alter their ability to modulate early auxin response genes expression. This Arabidopsis thaliana (Mouse-ear cress) protein is Auxin-responsive protein IAA2 (IAA2).